An 86-amino-acid chain; its full sequence is Beta-toxin CsEI (86 aa).

Positions 1-19 are cleaved as a signal peptide; the sequence is MNSLLMITACLVLIGTVWA. Positions 20-84 constitute an LCN-type CS-alpha/beta domain; it reads KDGYLVEKTG…TWPLPNKTCG (65 aa). Cystine bridges form between Cys-30/Cys-83, Cys-34/Cys-59, Cys-43/Cys-64, and Cys-47/Cys-66. At Cys-83 the chain carries Cysteine amide.

This sequence belongs to the long (4 C-C) scorpion toxin superfamily. Sodium channel inhibitor family. Beta subfamily. As to expression, expressed by the venom gland.

It is found in the secreted. Beta toxins bind voltage-independently at site-4 of sodium channels (Nav) and shift the voltage of activation toward more negative potentials thereby affecting sodium channel activation and promoting spontaneous and repetitive firing. Affects channels from chicken and frog. This is Beta-toxin CsEI from Centruroides sculpturatus (Arizona bark scorpion).